The sequence spans 149 residues: Ribonuclease H (149 aa).

Residues 1–145 form the RNase H type-1 domain; the sequence is MKKVIIYTDG…CDKLANEAMD (145 aa). The Mg(2+) site is built by aspartate 9, glutamate 50, aspartate 72, and aspartate 137.

It belongs to the RNase H family. As to quaternary structure, monomer. Mg(2+) is required as a cofactor.

The protein localises to the cytoplasm. The enzyme catalyses Endonucleolytic cleavage to 5'-phosphomonoester.. Functionally, endonuclease that specifically degrades the RNA of RNA-DNA hybrids. This is Ribonuclease H from Clostridium botulinum (strain ATCC 19397 / Type A).